A 242-amino-acid chain; its full sequence is Response regulator GtcR (242 aa).

Residues 4–117 (TILIADDEPE…EAVARIQAQL (114 aa)) enclose the Response regulatory domain. Position 53 is a 4-aspartylphosphate (Asp53). A DNA-binding region (ompR/PhoB-type) is located at residues 133–233 (TQSTTVGRLT…VRGLGYKFAS (101 aa)).

Phosphorylated by GtcS.

Its function is as follows. Member of the two-component regulatory system GtcS/GtcR which may act in the control of the transcription of the grs operon which encodes the multienzymes involved in the biosynthesis of the peptide antibiotic gramicidin S. The polypeptide is Response regulator GtcR (gtcR) (Aneurinibacillus migulanus (Bacillus migulanus)).